We begin with the raw amino-acid sequence, 88 residues long: Translation initiation factor IF-1 2 (88 aa).

Residues 1–72 (MAKEELIEMQ…TKGRITFRHL (72 aa)) form the S1-like domain.

The protein belongs to the IF-1 family. As to quaternary structure, component of the 30S ribosomal translation pre-initiation complex which assembles on the 30S ribosome in the order IF-2 and IF-3, IF-1 and N-formylmethionyl-tRNA(fMet); mRNA recruitment can occur at any time during PIC assembly.

Its subcellular location is the cytoplasm. In terms of biological role, one of the essential components for the initiation of protein synthesis. Stabilizes the binding of IF-2 and IF-3 on the 30S subunit to which N-formylmethionyl-tRNA(fMet) subsequently binds. Helps modulate mRNA selection, yielding the 30S pre-initiation complex (PIC). Upon addition of the 50S ribosomal subunit IF-1, IF-2 and IF-3 are released leaving the mature 70S translation initiation complex. The sequence is that of Translation initiation factor IF-1 2 from Acidovorax sp. (strain JS42).